A 100-amino-acid chain; its full sequence is Flagellar transcriptional regulator FlhD (100 aa).

The protein belongs to the FlhD family. As to quaternary structure, homodimer; disulfide-linked. Forms a heterohexamer composed of two FlhC and four FlhD subunits. Each FlhC binds a FlhD dimer, forming a heterotrimer, and a hexamer assembles by dimerization of two heterotrimers.

It localises to the cytoplasm. Functions in complex with FlhC as a master transcriptional regulator that regulates transcription of several flagellar and non-flagellar operons by binding to their promoter region. Activates expression of class 2 flagellar genes, including fliA, which is a flagellum-specific sigma factor that turns on the class 3 genes. Also regulates genes whose products function in a variety of physiological pathways. The chain is Flagellar transcriptional regulator FlhD from Ralstonia pickettii (strain 12D).